The primary structure comprises 866 residues: Paramyosin (866 aa).

The nonhelical region stretch occupies residues 1–22 (MMNHDTESHVKISRTIYRGVSP). The stretch at 23–839 (STTRLESRVR…AERTVTVRRV (817 aa)) forms a coiled coil. The tract at residues 840–866 (GPGGRAVSVARELSVTSNRGMRATSMM) is nonhelical region.

This sequence belongs to the paramyosin family. Homodimer.

It is found in the cytoplasm. The protein localises to the myofibril. Functionally, paramyosin is a major structural component of many thick filaments isolated from invertebrate muscles. The protein is Paramyosin of Schistosoma japonicum (Blood fluke).